A 93-amino-acid polypeptide reads, in one-letter code: Antitoxin EndoAI (93 aa).

It belongs to the MazE/EndoAI family. Homodimer, forms a heterohexamer composed of alternating toxin and antitoxin homodimers which inhibits the toxin's endoribonuclease activity. Antitoxin prevents RNA binding to the endoribonuclease.

In terms of biological role, antitoxin component of a type II toxin-antitoxin (TA) system. Antitoxin that directly inhibits activity of EndoA in vitro. Upon expression in E.coli counteracts inhibitory effect of endoribonuclease EndoA. The EndoA-EndoAI complex does not seem to bind its own promoter. This is Antitoxin EndoAI from Bacillus subtilis (strain 168).